The primary structure comprises 344 residues: Cyanuric acid amidohydrolase (344 aa).

The tract at residues 1-91 is RU A; sequence MTVVDIVKRT…ASAFVGTDRP (91 aa). Substrate-binding positions include Arg-51 and 71 to 72; that span reads SG. The segment at 97–232 is RU B; it reads ALVAAVGRTA…CHILVLGNSP (136 aa). The active site involves Lys-146. Substrate-binding positions include Arg-178 and 215–216; that span reads SS. Residue Ser-215 is the Nucleophile of the active site. Positions 238–344 are RU C; the sequence is LRAVHGVMRD…PVTVVYRVAS (107 aa). Glu-276 lines the Mg(2+) pocket. Substrate is bound by residues Arg-303 and 322–323; that span reads SG. Positions 325, 328, 329, 330, and 333 each coordinate Mg(2+).

Belongs to the cyclic amide hydrolase (CyAH) family. Homotetramer.

The enzyme catalyses cyanurate + H2O = 1-carboxybiuret + H(+). It functions in the pathway xenobiotic degradation; atrazine degradation; biuret from cyanurate: step 1/1. Its activity is regulated as follows. Inhibited by barbituric acid. Responsible for the hydrolysis of cyanuric acid, an intermediate formed during catabolism of s-triazine based compounds in herbicides such as atrazine and polymers such as melamine. Catalyzes the hydrolytic opening of the s-triazine ring of cyanuric acid (2,4,6-trihydroxy-s-triazine) to yield carbon dioxide and carboxybiuret, which spontaneously decarboxylates to biuret. The polypeptide is Cyanuric acid amidohydrolase (Pseudonocardia dioxanivorans (strain ATCC 55486 / DSM 44775 / JCM 13855 / CB1190)).